The sequence spans 360 residues: uncharacterized protein (360 aa).

4–22 (KVLHIGAGGFGERWCDTFL) is an NAD(+) binding site.

Functionally, could be a NAD-dependent oxidoreductase. This is an uncharacterized protein from Sinorhizobium fredii (strain NBRC 101917 / NGR234).